The sequence spans 142 residues: Large ribosomal subunit protein uL13 (142 aa).

The protein belongs to the universal ribosomal protein uL13 family. Part of the 50S ribosomal subunit.

Its function is as follows. This protein is one of the early assembly proteins of the 50S ribosomal subunit, although it is not seen to bind rRNA by itself. It is important during the early stages of 50S assembly. The sequence is that of Large ribosomal subunit protein uL13 from Alteromonas mediterranea (strain DSM 17117 / CIP 110805 / LMG 28347 / Deep ecotype).